The chain runs to 551 residues: Cytochrome P450 monooxygenase sdnQ (551 aa).

A disordered region spans residues 1–23 (MDDPSIASGFQQGTGRTTGANGT). The span at 8-23 (SGFQQGTGRTTGANGT) shows a compositional bias: polar residues. A glycan (N-linked (GlcNAc...) asparagine) is linked at Asn-21. Residues 41 to 57 (CIGTSLLVALLTTIIIY) traverse the membrane as a helical segment. Cys-491 contacts heme.

This sequence belongs to the cytochrome P450 family. Heme serves as cofactor.

It localises to the membrane. Its pathway is antibiotic biosynthesis. Cytochrome P450 monooxygenase; part of the gene cluster that mediates the biosynthesis of sordarin and hypoxysordarin, glycoside antibiotics with a unique tetracyclic diterpene aglycone structure. First, the geranylgeranyl diphosphate synthase sdnC constructs GGDP from farnesyl diphosphate and isopentenyl diphosphate. The diterpene cyclase sdnA then catalyzes the cyclization of GGDP to afford cycloaraneosene. Cycloaraneosene is then hydroxylated four times by the putative cytochrome P450 monooxygenases sdnB, sdnE, sdnF and sdnH to give a hydroxylated cycloaraneosene derivative such as cycloaraneosene-8,9,13,19-tetraol. Although the order of the hydroxylations is unclear, at least C8, C9 and C13 of the cycloaraneosene skeleton are hydroxylated before the sordaricin formation. Dehydration of the 13-hydroxy group of the hydroxylated cycloaraneosene derivative might be catalyzed by an unassigned hypothetical protein such as sdnG and sdnP to construct the cyclopentadiene moiety. The FAD-dependent oxidoreductase sdnN is proposed to catalyze the oxidation at C9 of the hydroxylated cycloaraneosene derivative and also catalyze the Baeyer-Villiger oxidation to give the lactone intermediate. The presumed lactone intermediate would be hydrolyzed to give an acrolein moiety and a carboxylate moiety. Then, [4+2]cycloaddition would occur between the acrolein moiety and the cyclopentadiene moiety to give sordaricin. SdnN might also be involved in the [4+2]cycloaddition after the hypothesized oxidation to accommodate the oxidized product and prompt the [4+2]cycloaddition. GDP-6-deoxy-D-altrose may be biosynthesized from GDP-D-mannose by the putative GDP-mannose-4,6-dehydratase sdnI and the short-chain dehydrogenase sdnK. The glycosyltransferase sdnJ catalyzes the attachment of 6-deoxy-D-altrose onto the 19-hydroxy group of sordaricin to give 4'-O-demethylsordarin. The methyltransferase sdnD would complete the biosynthesis of sordarin. Sordarin can be further modified into hypoxysordarin. The unique acyl chain at the 3'-hydroxy group of hypoxysordarin would be constructed by an iterative type I PKS sdnO and the trans-acting polyketide methyltransferase sdnL. SdnL would be responsible for the introduction of an alpha-methyl group of the polyketide chain. Alternatively, the beta-lactamase-like protein sdnR might be responsible for the cleavage and transfer of the polyketide chain from the PKS sdnO to sordarin. Two putative cytochrome P450 monooxygenases, sdnQ and sdnT, might catalyze the epoxidations of the polyketide chain to complete the biosynthesis of hypoxysordarin. Transcriptional regulators sdnM and sdnS are presumably encoded for the transcriptional regulation of the expression of the sdn gene cluster. This is Cytochrome P450 monooxygenase sdnQ from Sordaria araneosa (Pleurage araneosa).